Consider the following 80-residue polypeptide: Probable antimicrobial peptide clone Con10 (80 aa).

An N-terminal signal peptide occupies residues 1–24 (MQYKTKTFLVIFLAYLVVTNEAEA). Positions 56–80 (EIEDFFDPYQRELDLELERLLSQLQ) are excised as a propeptide.

This sequence belongs to the non-disulfide-bridged peptide (NDBP) superfamily. Medium-length antimicrobial peptide (group 3) family. Expressed by the venom gland.

Its subcellular location is the secreted. It localises to the target cell membrane. Antimicrobial peptide. Has antifungal activity against all strains tested (MIC=12.5-200 uM). May act by disrupting the integrity of the bacterial cell membrane. This chain is Probable antimicrobial peptide clone Con10, found in Opisthacanthus cayaporum (South American scorpion).